A 904-amino-acid chain; its full sequence is Pantothenate kinase 2 (904 aa).

The segment at 1-56 (MAANNNSDPILDEGGGGGVKHEAVGEAGEGKGGGGGAAATQAPAAMLPRSGSRPQL) is disordered. The pantothenate kinase stretch occupies residues 1-472 (MAANNNSDPI…LGDLNEKISW (472 aa)). The 4'-phosphopantetheine phosphatase stretch occupies residues 473-904 (MEKFVQKGTQ…DCICKFEPVP (432 aa)). Mn(2+) contacts are provided by Asp-735, Asn-736, and Asp-771. Residues 855-859 (EGMGR) carry the Subfamily II EGMGR motif motif.

It in the N-terminal section; belongs to the type II pantothenate kinase family. In the C-terminal section; belongs to the damage-control phosphatase family. Phosphopantetheine phosphatase II subfamily. The cofactor is Mn(2+). Ni(2+) is required as a cofactor.

It catalyses the reaction (R)-pantothenate + ATP = (R)-4'-phosphopantothenate + ADP + H(+). It carries out the reaction (R)-4'-phosphopantothenate + H2O = (R)-pantothenate + phosphate. The enzyme catalyses (R)-4'-phosphopantetheine + H2O = (R)-pantetheine + phosphate. The catalysed reaction is (R)-4'-phosphopantetheine sulfonate + H2O = (R)-pantetheine sulfonate + phosphate. The protein operates within cofactor biosynthesis; coenzyme A biosynthesis; CoA from (R)-pantothenate: step 1/5. In terms of biological role, catalyzes the phosphorylation of pantothenate the first step in CoA biosynthesis. May play a role in the physiological regulation of the intracellular CoA concentration. Functionally redudant with PANK1. The phosphatase activity shows preference for normal or oxidatively damaged intermediates of 4'-phosphopantetheine, which provides strong indirect evidence that the phosphatase activity pre-empts damage in the CoA pathway. Hydrolyzing excess 4'-phosphopantetheine could constitute a directed overflow mechanism to prevent its oxidation to the S-sulfonate, sulfonate, or other forms. Hydrolyzing 4'-phosphopantetheine sulfonate or S-sulfonate would forestall their conversion to inactive forms of CoA and acyl carrier protein. The sequence is that of Pantothenate kinase 2 from Oryza sativa subsp. japonica (Rice).